Consider the following 294-residue polypeptide: Aquaporin-B (294 aa).

Residues 1–31 (MSLKRSDDYQDLEEGIAMEDGGNIKDEEEKP) are disordered. Topologically, residues 1–42 (MSLKRSDDYQDLEEGIAMEDGGNIKDEEEKPLDPIEEQNKKR) are cytoplasmic. Over residues 22–31 (GNIKDEEEKP) the composition is skewed to basic and acidic residues. A helical membrane pass occupies residues 43–63 (WVLIRAVLGELLCTFLFVYVL). At 64–79 (CATSANFIRLGSPPNP) the chain is on the extracellular side. O-linked (GalNAc...) serine glycosylation occurs at S75. The helical transmembrane segment at 80–100 (VVGGLSTGFAAVALIYSFADV) threads the bilayer. The Cytoplasmic segment spans residues 101–123 (SGAHFNPAVTFATCVTRKTSITK). Residues 106 to 108 (NPA) carry the NPA 1 motif. The chain crosses the membrane as a helical span at residues 124–144 (GLMYVGAQLVGSVLASLILLA). At 145–172 (TFPGNFPGDKNAASAVAIAPSTDANIGN) the chain is on the extracellular side. A helical membrane pass occupies residues 173-193 (AFLTELVLTFILVYVIFAVAF). Over 194–224 (DTVDNSVKTKVVGKSSSNNLTIYTTSGQTKA) the chain is Cytoplasmic. The tract at residues 208–219 (SSSNNLTIYTTS) is required for water permeability. Residues 225-245 (GFAPIAIGFTLGFLCFLGGSV) form a helical membrane-spanning segment. Over 246 to 268 (SGGAFNPARVFGTALVGNNWTRH) the chain is Extracellular. Residues 251-253 (NPA) carry the NPA 2 motif. The helical transmembrane segment at 269–289 (WMYWIADFLGAGLAGFAQKFF) threads the bilayer. Residues 290-294 (SSTHK) lie on the Cytoplasmic side of the membrane.

This sequence belongs to the MIP/aquaporin (TC 1.A.8) family. In terms of processing, glycosylated and non-glycosylated forms exist throughout all developmental stages.

The protein resides in the cell membrane. The protein localises to the cytoplasmic vesicle. Functionally, putatively gated water-specific channel, requiring a cysteine residue within the channel. Impermeable to water, glycerol and urea when expressed in Xenopus oocytes. Not regulated by pH; channels remain impermeable to water at pH 7.4 and 5.2. The chain is Aquaporin-B from Dictyostelium discoideum (Social amoeba).